The sequence spans 209 residues: Glycerol-3-phosphate acyltransferase (209 aa).

5 helical membrane-spanning segments follow: residues 4–24, 53–75, 80–102, 112–132, and 138–158; these read IAIGMIIFAYLCGSVSNAILI, LAAAGVMVFDVLKGMIPVWIGYG, PFWLGLVAIAACLGHIYPIFFHF, LGAIAPIGYDLSGLMIGTWLL, and GYSSLGAIVSALIAPFYVWWF.

Belongs to the PlsY family. Probably interacts with PlsX.

The protein resides in the cell inner membrane. The catalysed reaction is an acyl phosphate + sn-glycerol 3-phosphate = a 1-acyl-sn-glycero-3-phosphate + phosphate. It participates in lipid metabolism; phospholipid metabolism. Functionally, catalyzes the transfer of an acyl group from acyl-phosphate (acyl-PO(4)) to glycerol-3-phosphate (G3P) to form lysophosphatidic acid (LPA). This enzyme utilizes acyl-phosphate as fatty acyl donor, but not acyl-CoA or acyl-ACP. This chain is Glycerol-3-phosphate acyltransferase, found in Sodalis glossinidius (strain morsitans).